The primary structure comprises 129 residues: Large ribosomal subunit protein bL20 (129 aa).

It belongs to the bacterial ribosomal protein bL20 family.

Functionally, binds directly to 23S ribosomal RNA and is necessary for the in vitro assembly process of the 50S ribosomal subunit. It is not involved in the protein synthesizing functions of that subunit. This Mycobacterium tuberculosis (strain ATCC 25177 / H37Ra) protein is Large ribosomal subunit protein bL20.